Here is a 365-residue protein sequence, read N- to C-terminus: tRNA 2-selenouridine synthase (365 aa).

The 124-residue stretch at 15-138 (LVSDHPIMDA…MRQFLIETID (124 aa)) folds into the Rhodanese domain. Residue cysteine 98 is the S-selanylcysteine intermediate of the active site.

Belongs to the SelU family. In terms of assembly, monomer.

It carries out the reaction 5-methylaminomethyl-2-thiouridine(34) in tRNA + selenophosphate + (2E)-geranyl diphosphate + H2O + H(+) = 5-methylaminomethyl-2-selenouridine(34) in tRNA + (2E)-thiogeraniol + phosphate + diphosphate. It catalyses the reaction 5-methylaminomethyl-2-thiouridine(34) in tRNA + (2E)-geranyl diphosphate = 5-methylaminomethyl-S-(2E)-geranyl-thiouridine(34) in tRNA + diphosphate. The enzyme catalyses 5-methylaminomethyl-S-(2E)-geranyl-thiouridine(34) in tRNA + selenophosphate + H(+) = 5-methylaminomethyl-2-(Se-phospho)selenouridine(34) in tRNA + (2E)-thiogeraniol. The catalysed reaction is 5-methylaminomethyl-2-(Se-phospho)selenouridine(34) in tRNA + H2O = 5-methylaminomethyl-2-selenouridine(34) in tRNA + phosphate. In terms of biological role, involved in the post-transcriptional modification of the uridine at the wobble position (U34) of tRNA(Lys), tRNA(Glu) and tRNA(Gln). Catalyzes the conversion of 2-thiouridine (S2U-RNA) to 2-selenouridine (Se2U-RNA). Acts in a two-step process involving geranylation of 2-thiouridine (S2U) to S-geranyl-2-thiouridine (geS2U) and subsequent selenation of the latter derivative to 2-selenouridine (Se2U) in the tRNA chain. In Shewanella piezotolerans (strain WP3 / JCM 13877), this protein is tRNA 2-selenouridine synthase.